Reading from the N-terminus, the 189-residue chain is UPF0301 protein RC0043 (189 aa).

Belongs to the UPF0301 (AlgH) family.

The polypeptide is UPF0301 protein RC0043 (Rickettsia conorii (strain ATCC VR-613 / Malish 7)).